Reading from the N-terminus, the 453-residue chain is Chromosomal replication initiator protein DnaA (453 aa).

A domain I, interacts with DnaA modulators region spans residues 1–74; it reads MKEKQFWNRI…GFEIYDAEIT (74 aa). A domain II region spans residues 74-113; sequence TPHYIFTKPQDTTSSQVEEATNLTLYDYSPKLVSIPYSDT. Residues 114 to 331 are domain III, AAA+ region; that stretch reads GLKEKYTFDN…GAINDITLIA (218 aa). Glycine 158, glycine 160, lysine 161, and threonine 162 together coordinate ATP. The interval 332 to 453 is domain IV, binds dsDNA; it reads RVKKIKDITI…EIESIKKKIK (122 aa).

Belongs to the DnaA family. In terms of assembly, oligomerizes as a right-handed, spiral filament on DNA at oriC. Interacts (via domains I and III) with CcrZ.

It localises to the cytoplasm. With respect to regulation, ccrZ stimulates DnaA, possibly by phosphorylation of an intermediate molecule, to initiate DNA replication. In terms of biological role, plays an essential role in the initiation and regulation of chromosomal replication. ATP-DnaA binds to the origin of replication (oriC) to initiate formation of the DNA replication initiation complex once per cell cycle. Binds the DnaA box (a 9 base pair repeat at the origin) and separates the double-stranded (ds)DNA. Forms a right-handed helical filament on oriC DNA; dsDNA binds to the exterior of the filament while single-stranded (ss)DNA is stabiized in the filament's interior. The ATP-DnaA-oriC complex binds and stabilizes one strand of the AT-rich DNA unwinding element (DUE), permitting loading of DNA polymerase. After initiation quickly degrades to an ADP-DnaA complex that is not apt for DNA replication. Binds acidic phospholipids. Mutations in this gene suppress a deletion of cell cycle regulator ccrZ. The sequence is that of Chromosomal replication initiator protein DnaA from Streptococcus pneumoniae serotype 2 (strain D39 / NCTC 7466).